A 360-amino-acid chain; its full sequence is DNA replication and repair protein RecF (360 aa).

30–37 contacts ATP; the sequence is GQNGSGKT.

It belongs to the RecF family.

It localises to the cytoplasm. Its function is as follows. The RecF protein is involved in DNA metabolism; it is required for DNA replication and normal SOS inducibility. RecF binds preferentially to single-stranded, linear DNA. It also seems to bind ATP. The chain is DNA replication and repair protein RecF from Shewanella baltica (strain OS155 / ATCC BAA-1091).